The chain runs to 117 residues: MDWTWRFLFVVAAATGVQSQVQLVQSGAEVKKPGSSVKVSCKASGGTFSSYAISWVRQAPGQGLEWMGGIIPIFGTANYAQKFQGRVTITADESTSTAYMELSSLRSEDTAVYYCAR.

Positions 1 to 19 are cleaved as a signal peptide; the sequence is MDWTWRFLFVVAAATGVQS. Residue glutamine 20 is modified to Pyrrolidone carboxylic acid. The interval 20 to 44 is framework-1; the sequence is QVQLVQSGAEVKKPGSSVKVSCKAS. Positions 20–117 constitute an Ig-like domain; sequence QVQLVQSGAE…EDTAVYYCAR (98 aa). A disulfide bridge connects residues cysteine 41 and cysteine 115. Positions 45-52 are complementarity-determining-1; sequence GGTFSSYA. The segment at 53 to 69 is framework-2; that stretch reads ISWVRQAPGQGLEWMGG. The interval 70-77 is complementarity-determining-2; that stretch reads IIPIFGTA. The framework-3 stretch occupies residues 78–115; sequence NYAQKFQGRVTITADESTSTAYMELSSLRSEDTAVYYC. Positions 116–117 are complementarity-determining-3; sequence AR.

As to quaternary structure, immunoglobulins are composed of two identical heavy chains and two identical light chains; disulfide-linked.

The protein localises to the secreted. Its subcellular location is the cell membrane. Its function is as follows. V region of the variable domain of immunoglobulin heavy chains that participates in the antigen recognition. Immunoglobulins, also known as antibodies, are membrane-bound or secreted glycoproteins produced by B lymphocytes. In the recognition phase of humoral immunity, the membrane-bound immunoglobulins serve as receptors which, upon binding of a specific antigen, trigger the clonal expansion and differentiation of B lymphocytes into immunoglobulins-secreting plasma cells. Secreted immunoglobulins mediate the effector phase of humoral immunity, which results in the elimination of bound antigens. The antigen binding site is formed by the variable domain of one heavy chain, together with that of its associated light chain. Thus, each immunoglobulin has two antigen binding sites with remarkable affinity for a particular antigen. The variable domains are assembled by a process called V-(D)-J rearrangement and can then be subjected to somatic hypermutations which, after exposure to antigen and selection, allow affinity maturation for a particular antigen. The polypeptide is Immunoglobulin heavy variable 1-69D (Homo sapiens (Human)).